The primary structure comprises 139 residues: Putative nickel-responsive regulator (139 aa).

H79, H90, H92, and C98 together coordinate Ni(2+).

This sequence belongs to the transcriptional regulatory CopG/NikR family. Ni(2+) serves as cofactor.

Functionally, transcriptional regulator. This chain is Putative nickel-responsive regulator, found in Geotalea uraniireducens (strain Rf4) (Geobacter uraniireducens).